Consider the following 142-residue polypeptide: Chorion class A protein Ld19 (142 aa).

An N-terminal signal peptide occupies residues 1 to 18 (MNSFALLLVCIQACLVQS).

This sequence belongs to the chorion protein family.

In terms of biological role, this protein is one of many from the eggshell of the gypsy moth. This is Chorion class A protein Ld19 from Lymantria dispar (Gypsy moth).